Reading from the N-terminus, the 380-residue chain is F-box protein At4g18380 (380 aa).

Positions 22–70 (IDHFDNLPDSILLLIFNNIGDVKALGRCSVVSKRFHSLIPQVENVFVRV) constitute an F-box domain.

The protein is F-box protein At4g18380 of Arabidopsis thaliana (Mouse-ear cress).